Reading from the N-terminus, the 79-residue chain is Acyl carrier protein (79 aa).

Positions 2–77 (SDVAERVKKI…DAIDFIKANA (76 aa)) constitute a Carrier domain. S37 is modified (O-(pantetheine 4'-phosphoryl)serine).

The protein belongs to the acyl carrier protein (ACP) family. 4'-phosphopantetheine is transferred from CoA to a specific serine of apo-ACP by AcpS. This modification is essential for activity because fatty acids are bound in thioester linkage to the sulfhydryl of the prosthetic group.

It is found in the cytoplasm. The protein operates within lipid metabolism; fatty acid biosynthesis. In terms of biological role, carrier of the growing fatty acid chain in fatty acid biosynthesis. This is Acyl carrier protein from Azospirillum brasilense.